A 901-amino-acid chain; its full sequence is Phosphatidylinositol 3-kinase catalytic subunit type 3 (901 aa).

A C2 PI3K-type domain is found at 21–189 (LQTNVQVKVA…DLLFKQVTRQ (169 aa)). Residues 302 to 527 (RHRQVKPNKQ…SKMYQNIQDR (226 aa)) form the PIK helical domain. One can recognise a PI3K/PI4K catalytic domain in the interval 607-886 (IPDTASFFKS…QIESSLNAKM (280 aa)). The segment at 613 to 619 (FFKSEMM) is G-loop. Residues 755-763 (GLGDRHLDN) are catalytic loop. Positions 774-795 (HVDFGFILGRDPKPMPPPMKLT) are activation loop.

It belongs to the PI3/PI4-kinase family. As to quaternary structure, interacts with bec-1. May interact with dyn-1. It depends on Mn(2+) as a cofactor. As to expression, ubiquitous.

It localises to the nucleus outer membrane. Its subcellular location is the cytoplasm. The protein localises to the cytoplasmic granule. The protein resides in the cell projection. It is found in the phagocytic cup. It carries out the reaction a 1,2-diacyl-sn-glycero-3-phospho-(1D-myo-inositol) + ATP = a 1,2-diacyl-sn-glycero-3-phospho-(1D-myo-inositol-3-phosphate) + ADP + H(+). Its activity is regulated as follows. Inhibited by wortmannin. Catalytic subunit of the PI3K complex that mediates formation of phosphatidylinositol 3-phosphate. Together with bec-1, mediates the production of phosphatidylinositol 3-phosphate on intracellular vesicles and thereby regulates membrane trafficking. Plays a role in endosome-to-Golgi retrograde transport of mig-14. Involved in clearance of apoptotic cell corpses by phagosomes. Phagosome maturation requires two sequential and non-overlapping pulses of phosphatidylinositol-3-phosphate (PI3P) on the vesicle surface which mediates recruitment of sortins snx-1 and lst-4 and small GTPases rab-5, rab-2 and rab-7, downstream of dynamin dyn-1. The first pulse is initiated by piki-1, then maintained by vps-34 which also produces the second pulse. Required for embryonic development. Together with bec-1, involved in L3/L4 larval molting stage probably by regulating cuticle shedding. Regulates the expansion of the nucleus outer membrane. Involved in the secretion and localization of lrp-1 at the apical surface of hyp7 syncytium. May regulate endocytosis in hypodermal cells. May play a role in the formation of gut granules (a lysosome-related organelle). Plays a role in germ stem cell proliferation during larval development. The chain is Phosphatidylinositol 3-kinase catalytic subunit type 3 from Caenorhabditis elegans.